A 130-amino-acid chain; its full sequence is RutC family protein slr0709 (130 aa).

It belongs to the RutC family.

The polypeptide is RutC family protein slr0709 (Synechocystis sp. (strain ATCC 27184 / PCC 6803 / Kazusa)).